The primary structure comprises 622 residues: Arginine--tRNA ligase (622 aa).

The short motif at 127-137 (ANPVHPLHVGH) is the 'HIGH' region element.

It belongs to the class-I aminoacyl-tRNA synthetase family.

It is found in the cytoplasm. The catalysed reaction is tRNA(Arg) + L-arginine + ATP = L-arginyl-tRNA(Arg) + AMP + diphosphate. The sequence is that of Arginine--tRNA ligase from Ignicoccus hospitalis (strain KIN4/I / DSM 18386 / JCM 14125).